We begin with the raw amino-acid sequence, 217 residues long: MNQTLLSSFGTPFERVENALAALREGRGVMVLDDEDRENEGDMIFPAETMTVEQMALTIRHGSGIVCLCITEDRRKQLDLPMMVENNTSAYGTGFTVTIEAAEGVTTGVSAADRITTVRAAIADGAKPSDLNRPGHVFPLRAQAGGVLTRGGHTEATIDLMTLAGFKPAGVLCELTNDDGTMARAPECIEFANKHNMALVTIEDLVAYRQAHERKAS.

D-ribulose 5-phosphate contacts are provided by residues 37–38 (RE), Asp-42, 150–154 (RGGHT), and Glu-174. Residue Glu-38 coordinates Mg(2+). Residue His-153 participates in Mg(2+) binding.

The protein belongs to the DHBP synthase family. Homodimer. The cofactor is Mg(2+). Mn(2+) is required as a cofactor.

It catalyses the reaction D-ribulose 5-phosphate = (2S)-2-hydroxy-3-oxobutyl phosphate + formate + H(+). Its pathway is cofactor biosynthesis; riboflavin biosynthesis; 2-hydroxy-3-oxobutyl phosphate from D-ribulose 5-phosphate: step 1/1. In terms of biological role, catalyzes the conversion of D-ribulose 5-phosphate to formate and 3,4-dihydroxy-2-butanone 4-phosphate. The polypeptide is 3,4-dihydroxy-2-butanone 4-phosphate synthase (Shigella boydii serotype 18 (strain CDC 3083-94 / BS512)).